Consider the following 286-residue polypeptide: Tryptophan 2,3-dioxygenase (286 aa).

Substrate-binding positions include 53–57, Tyr-115, and Arg-119; that span reads FIVQH. A heme-binding site is contributed by His-242. Thr-256 lines the substrate pocket.

Belongs to the tryptophan 2,3-dioxygenase family. Homotetramer. The cofactor is heme.

It catalyses the reaction L-tryptophan + O2 = N-formyl-L-kynurenine. The protein operates within amino-acid degradation; L-tryptophan degradation via kynurenine pathway; L-kynurenine from L-tryptophan: step 1/2. Its function is as follows. Heme-dependent dioxygenase that catalyzes the oxidative cleavage of the L-tryptophan (L-Trp) pyrrole ring and converts L-tryptophan to N-formyl-L-kynurenine. Catalyzes the oxidative cleavage of the indole moiety. This is Tryptophan 2,3-dioxygenase from Kineococcus radiotolerans (strain ATCC BAA-149 / DSM 14245 / SRS30216).